The primary structure comprises 324 residues: tRNA pseudouridine synthase B (324 aa).

Asp49 serves as the catalytic Nucleophile. The segment at 87-107 (RSTDDLEGQPTKTSDKRPSRE) is disordered.

This sequence belongs to the pseudouridine synthase TruB family. Type 1 subfamily.

It catalyses the reaction uridine(55) in tRNA = pseudouridine(55) in tRNA. In terms of biological role, responsible for synthesis of pseudouridine from uracil-55 in the psi GC loop of transfer RNAs. The protein is tRNA pseudouridine synthase B of Brucella canis (strain ATCC 23365 / NCTC 10854 / RM-666).